The sequence spans 547 residues: Sodium-coupled neutral amino acid transporter 4 (547 aa).

A disordered region spans residues 1-26 (MDPMELRNVNIEPDDESSSGESVPDS). Residues 1–104 (MDPMELRNVN…GLSYAMANTG (104 aa)) lie on the Extracellular side of the membrane. Ser49 is modified (phosphoserine). Residues 105–125 (IILFIIMLLAVAILSLYSVHL) form a helical membrane-spanning segment. At 126–151 (LLKTAKEGGSLIYEKLGEKAFGWPGK) the chain is on the cytoplasmic side. The helical transmembrane segment at 152–172 (IGAFISITMQNIGAMSSYLFI) threads the bilayer. Residues 173–195 (IKYELPEVIRAFMGLEENTGEWY) are Extracellular-facing. Residues 196–216 (PNGNYLIVFVSLGIILPLSLL) form a helical membrane-spanning segment. The Cytoplasmic portion of the chain corresponds to 217–220 (KNLG). Residues 221–241 (YLGYTSGFSLTCMVFFVSVVI) traverse the membrane as a helical segment. Residues 242-332 (YKKFQIPCPL…PKYFVFNSRT (91 aa)) are Extracellular-facing. A disulfide bridge links Cys249 with Cys321. Asn260, Asn264, and Asn276 each carry an N-linked (GlcNAc...) asparagine glycan. The chain crosses the membrane as a helical span at residues 333 to 353 (AYAIPILAFAFVCHPEVLPIY). The Cytoplasmic segment spans residues 354 to 369 (SELKDRSRRKMQTVSN). A helical transmembrane segment spans residues 370 to 390 (ISITGMLVMYLLAALFGYLTF). Over 391 to 411 (YGEVEDELLHAYSKVYTFDIP) the chain is Extracellular. A helical membrane pass occupies residues 412-432 (LLMVRLAVLVAVTLTVPIVLF). Over 433-453 (PIRTSVTTLLFPKRPFSWIRH) the chain is Cytoplasmic. Residues 454 to 474 (FLIAAVLIALNNVLVILVPTI) form a helical membrane-spanning segment. The Extracellular portion of the chain corresponds to 475 to 476 (KY). The helical transmembrane segment at 477–497 (IFGFIGASSATMLIFILPAVF) threads the bilayer. Residues 498–514 (YLKLVKKESFRSPQKVG) lie on the Cytoplasmic side of the membrane. A helical transmembrane segment spans residues 515–535 (ALIFLVVGIIFMIGSMALIII). The Extracellular portion of the chain corresponds to 536 to 547 (DWIYDPPNSKHH).

The protein belongs to the amino acid/polyamine transporter 2 family. Post-translationally, the disulfide bond plays an important role in substrate transport, but has no effect on trafficking to the cell surface.

The protein localises to the cell membrane. The protein resides in the cell projection. Its subcellular location is the microvillus membrane. It carries out the reaction L-methionine(in) + Na(+)(in) = L-methionine(out) + Na(+)(out). It catalyses the reaction L-asparagine(in) + Na(+)(in) = L-asparagine(out) + Na(+)(out). The catalysed reaction is L-threonine(in) + Na(+)(in) = L-threonine(out) + Na(+)(out). The enzyme catalyses L-serine(in) + Na(+)(in) = L-serine(out) + Na(+)(out). It carries out the reaction glycine(in) + Na(+)(in) = glycine(out) + Na(+)(out). It catalyses the reaction L-alanine(in) + Na(+)(in) = L-alanine(out) + Na(+)(out). The catalysed reaction is L-glutamine(in) + Na(+)(in) = L-glutamine(out) + Na(+)(out). The enzyme catalyses L-histidine(in) + Na(+)(in) = L-histidine(out) + Na(+)(out). It carries out the reaction L-cysteine(in) + Na(+)(in) = L-cysteine(out) + Na(+)(out). It catalyses the reaction L-proline(in) + Na(+)(in) = L-proline(out) + Na(+)(out). Its function is as follows. Symporter that cotransports neutral amino acids and sodium ions from the extraccellular to the intracellular side of the cell membrane. The transport is electrogenic, pH dependent and partially tolerates substitution of Na(+) by Li(+). Preferentially transports smaller amino acids, such as glycine, L-alanine, L-serine, L-asparagine and L-threonine, followed by L-cysteine, L-histidine, L-proline and L-glutamine and L-methionine. The chain is Sodium-coupled neutral amino acid transporter 4 from Pongo abelii (Sumatran orangutan).